The primary structure comprises 153 residues: Ribonuclease K6 (153 aa).

Positions 1–27 (MVVDLPRYLPLLLLLELWEPMYLLCSQ) are cleaved as a signal peptide. Residue His-41 is the Proton acceptor of the active site. 4 disulfides stabilise this stretch: Cys-49–Cys-107, Cys-63–Cys-117, Cys-81–Cys-132, and Cys-88–Cys-95. A glycan (N-linked (GlcNAc...) asparagine) is linked at Asn-58. 64 to 68 (KQINT) is a binding site for substrate. A glycan (N-linked (GlcNAc...) asparagine) is linked at Asn-85. Lys-89 contacts substrate. The active-site Proton donor is His-148.

This sequence belongs to the pancreatic ribonuclease family. In terms of assembly, interacts (via N-terminus) with bacterial lipopolysaccharide (LPS). As to expression, highly expressed in spleen (at protein level). Has little or no expression in healthy kidneys (at protein level). Detected at high levels in infected kidneys (at protein level). Expressed at low levels in bladder. Also detected in skeletal muscle, heart and bone marrow.

It is found in the secreted. The protein resides in the lysosome. It localises to the cytoplasmic granule. Functionally, ribonuclease which shows a preference for the pyrimidines uridine and cytosine. Has potent antibacterial activity against a range of Gram-positive and Gram-negative bacteria, including P.aeruginosa, A.baumanii, M.luteus, S.aureus, E.faecalis, E.faecium, S.saprophyticus and E.coli. Causes loss of bacterial membrane integrity, and also promotes agglutination of Gram-negative bacteria. Probably contributes to urinary tract sterility. Bactericidal activity is independent of RNase activity. This chain is Ribonuclease K6 (Rnase6), found in Mus musculus (Mouse).